Here is a 572-residue protein sequence, read N- to C-terminus: Methionine--tRNA ligase (572 aa).

The short motif at 11 to 21 (PYVNHVPHLGT) is the 'HIGH' region element. Zn(2+) is bound by residues Cys-143, Cys-146, Cys-156, and Cys-159. Residues 334–338 (QFSKS) carry the 'KMSKS' region motif. Lys-337 contacts ATP.

It belongs to the class-I aminoacyl-tRNA synthetase family. MetG type 1 subfamily. It depends on Zn(2+) as a cofactor.

The protein resides in the cytoplasm. The catalysed reaction is tRNA(Met) + L-methionine + ATP = L-methionyl-tRNA(Met) + AMP + diphosphate. Is required not only for elongation of protein synthesis but also for the initiation of all mRNA translation through initiator tRNA(fMet) aminoacylation. This Aeropyrum pernix (strain ATCC 700893 / DSM 11879 / JCM 9820 / NBRC 100138 / K1) protein is Methionine--tRNA ligase (metG).